Consider the following 120-residue polypeptide: Small ribosomal subunit protein bS16 (120 aa).

The disordered stretch occupies residues 81 to 120; the sequence is GLAKRPARNNPQKAEPGEKAKERAAKRAEKAAAPAEDAAA. The segment covering 95–110 has biased composition (basic and acidic residues); sequence EPGEKAKERAAKRAEK. Low complexity predominate over residues 111–120; sequence AAAPAEDAAA.

Belongs to the bacterial ribosomal protein bS16 family.

The protein is Small ribosomal subunit protein bS16 of Methylobacterium radiotolerans (strain ATCC 27329 / DSM 1819 / JCM 2831 / NBRC 15690 / NCIMB 10815 / 0-1).